The following is a 481-amino-acid chain: Innexin inx6 (481 aa).

Residues 1-21 (MYAAVKPLSNYLRLKTVRIYD) are Cytoplasmic-facing. The chain crosses the membrane as a helical span at residues 22–42 (PIFTLHSKCTIVILLTCTFLL). Residues 43–144 (SAKQYFGEPI…VTKRMYLRYY (102 aa)) lie on the Extracellular side of the membrane. A helical membrane pass occupies residues 145–165 (QWVFMILLFQSLLFYFPSFLW). Topologically, residues 166-220 (KVWEGQRMEQLCCEVGDALIVEATYRTRLQMLTRYFRAQFAPIHWCYSIKYAFCE) are cytoplasmic. A helical transmembrane segment spans residues 221 to 241 (LLNVFISILNFWLMDVVFNGF). The Extracellular segment spans residues 242 to 302 (WYKYIHALAA…VLPLNILNEK (61 aa)). Residues 303–323 (IFAVLYVWFLFIALLAIMNIL) traverse the membrane as a helical segment. The Cytoplasmic portion of the chain corresponds to 324-481 (YRLLVICCPE…MDRFFHESHA (158 aa)).

This sequence belongs to the pannexin family. Uniform expression in the imaginal wing disk. Expressed in an outer layer of the pupal developing CNS. Also expressed in pupal retina: cone cells and primary pigment cells.

The protein resides in the cell membrane. It is found in the cell junction. The protein localises to the gap junction. Its function is as follows. Structural components of the gap junctions. This is Innexin inx6 (Inx6) from Drosophila melanogaster (Fruit fly).